Consider the following 149-residue polypeptide: Protein cornichon homolog 2 (149 aa).

Helical transmembrane passes span 3–23 (IELILWLFSFASIMVLIGLTA), 59–79 (ALCASFLLTLHWFPFLVMAPV), and 117–137 (YFSLFIITIYRLVMTAVTLFI).

Belongs to the cornichon family.

The protein localises to the endoplasmic reticulum membrane. It localises to the golgi apparatus membrane. In terms of biological role, acts as a cargo receptor necessary for the transportation of secretory proteins from the endoplasmic reticulum (ER) in COPII-coated vesicles targeted to the Golgi apparatus. The protein is Protein cornichon homolog 2 of Oryza sativa subsp. japonica (Rice).